Reading from the N-terminus, the 450-residue chain is E3 ubiquitin-protein ligase XB3 (450 aa).

ANK repeat units follow at residues 11–40, 46–75, 79–108, 113–142, 158–187, and 195–225; these read GDEH…SLAR, DRLS…PPDA, HKQT…NILM, HART…TTPV, HGAT…IVSA, and PGST…RLQR. The disordered stretch occupies residues 291 to 312; the sequence is ILNGTKYSLPSPSPGDDSADDD. An RING-type zinc finger spans residues 323–372; that stretch reads CCICFDQACTIEVQDCGHQMCAPCTLALCCHNKPNPTTLTPPSPACPFCR. The interval 385–450 is disordered; the sequence is SACDPDKPSS…SNLDKPEHDL (66 aa).

In terms of assembly, interacts (via ankyrin repeats) with XA21. In terms of processing, phosphorylated by XA21.

It carries out the reaction S-ubiquitinyl-[E2 ubiquitin-conjugating enzyme]-L-cysteine + [acceptor protein]-L-lysine = [E2 ubiquitin-conjugating enzyme]-L-cysteine + N(6)-ubiquitinyl-[acceptor protein]-L-lysine.. It participates in protein modification; protein ubiquitination. Functionally, E3 ubiquitin-protein ligase required for full accumulation of the LRR receptor kinase XA21 and XA21-mediated disease resistance. Binding to XA21 may stabilize the receptor kinase and maintain its protein level. Autoubiquitinated in vitro. This is E3 ubiquitin-protein ligase XB3 (XB3) from Oryza sativa subsp. japonica (Rice).